A 51-amino-acid chain; its full sequence is Defensin (51 aa).

Disulfide bonds link C3–C31, C17–C36, and C21–C38. Residue F51 is modified to Phenylalanine amide.

Its subcellular location is the secreted. Its function is as follows. Antibacterial peptide against Gram-positive and Gram-negative bacteria and fungi. The protein is Defensin of Bombus pascuorum (Common carder bumblebee).